Consider the following 210-residue polypeptide: Thiamine-phosphate synthase (210 aa).

Residues 39–43 and asparagine 71 contribute to the 4-amino-2-methyl-5-(diphosphooxymethyl)pyrimidine site; that span reads QLREK. Residues aspartate 72 and aspartate 91 each contribute to the Mg(2+) site. Serine 110 lines the 4-amino-2-methyl-5-(diphosphooxymethyl)pyrimidine pocket. 134–136 is a binding site for 2-[(2R,5Z)-2-carboxy-4-methylthiazol-5(2H)-ylidene]ethyl phosphate; that stretch reads TPT. Lysine 137 is a 4-amino-2-methyl-5-(diphosphooxymethyl)pyrimidine binding site. 2-[(2R,5Z)-2-carboxy-4-methylthiazol-5(2H)-ylidene]ethyl phosphate is bound at residue glycine 163.

This sequence belongs to the thiamine-phosphate synthase family. It depends on Mg(2+) as a cofactor.

The enzyme catalyses 2-[(2R,5Z)-2-carboxy-4-methylthiazol-5(2H)-ylidene]ethyl phosphate + 4-amino-2-methyl-5-(diphosphooxymethyl)pyrimidine + 2 H(+) = thiamine phosphate + CO2 + diphosphate. It carries out the reaction 2-(2-carboxy-4-methylthiazol-5-yl)ethyl phosphate + 4-amino-2-methyl-5-(diphosphooxymethyl)pyrimidine + 2 H(+) = thiamine phosphate + CO2 + diphosphate. The catalysed reaction is 4-methyl-5-(2-phosphooxyethyl)-thiazole + 4-amino-2-methyl-5-(diphosphooxymethyl)pyrimidine + H(+) = thiamine phosphate + diphosphate. It participates in cofactor biosynthesis; thiamine diphosphate biosynthesis; thiamine phosphate from 4-amino-2-methyl-5-diphosphomethylpyrimidine and 4-methyl-5-(2-phosphoethyl)-thiazole: step 1/1. Its function is as follows. Condenses 4-methyl-5-(beta-hydroxyethyl)thiazole monophosphate (THZ-P) and 2-methyl-4-amino-5-hydroxymethyl pyrimidine pyrophosphate (HMP-PP) to form thiamine monophosphate (TMP). This Campylobacter jejuni subsp. jejuni serotype O:2 (strain ATCC 700819 / NCTC 11168) protein is Thiamine-phosphate synthase.